The following is a 498-amino-acid chain: Cytochrome c-552 (498 aa).

The signal sequence occupies residues 1–31; that stretch reads MKNKERKLKSWQGWLIFSSSMVVVFCLGLLA. Residue histidine 119 coordinates heme c. Heme contacts are provided by cysteine 148, cysteine 151, and lysine 152. Heme c is bound by residues cysteine 186, cysteine 189, histidine 190, cysteine 228, cysteine 231, and histidine 232. Ca(2+) is bound by residues glutamate 234, tyrosine 235, lysine 280, and glutamine 282. Tyrosine 235 lines the substrate pocket. Histidine 283 is a binding site for substrate. Histidine 294, cysteine 301, cysteine 304, histidine 305, histidine 319, cysteine 332, cysteine 335, histidine 336, and histidine 411 together coordinate heme c.

This sequence belongs to the cytochrome c-552 family. Ca(2+) is required as a cofactor. Requires heme c as cofactor.

The protein resides in the periplasm. The enzyme catalyses 6 Fe(III)-[cytochrome c] + NH4(+) + 2 H2O = 6 Fe(II)-[cytochrome c] + nitrite + 8 H(+). It participates in nitrogen metabolism; nitrate reduction (assimilation). Catalyzes the reduction of nitrite to ammonia, consuming six electrons in the process. The polypeptide is Cytochrome c-552 (Porphyromonas gingivalis (strain ATCC BAA-308 / W83)).